A 270-amino-acid polypeptide reads, in one-letter code: tRNA pseudouridine synthase A (270 aa).

Asp-52 (nucleophile) is an active-site residue. Tyr-110 contributes to the substrate binding site. Residues 251-270 are disordered; the sequence is TGAADEPAAPHGVTETRMQL.

This sequence belongs to the tRNA pseudouridine synthase TruA family. Homodimer.

The enzyme catalyses uridine(38/39/40) in tRNA = pseudouridine(38/39/40) in tRNA. Functionally, formation of pseudouridine at positions 38, 39 and 40 in the anticodon stem and loop of transfer RNAs. This is tRNA pseudouridine synthase A from Roseiflexus sp. (strain RS-1).